The primary structure comprises 295 residues: uncharacterized protein (295 aa).

The signal sequence occupies residues 1–19 (MHKLLLIITVFSTFNVAQA).

This is an uncharacterized protein from Rickettsia typhi (strain ATCC VR-144 / Wilmington).